Reading from the N-terminus, the 344-residue chain is Adenosine kinase 1 (344 aa).

Asp-299 is an active-site residue.

This sequence belongs to the carbohydrate kinase PfkB family. Interacts with the begomovirus AL2 protein and the curtovirus L2 protein. The cofactor is Mg(2+). In terms of tissue distribution, widely expressed.

The enzyme catalyses adenosine + ATP = AMP + ADP + H(+). Its pathway is purine metabolism; AMP biosynthesis via salvage pathway; AMP from adenosine: step 1/1. With respect to regulation, inactivated by the begomovirus AL2 protein or the curtovirus L2 protein. Functionally, ATP dependent phosphorylation of adenosine and other related nucleoside analogs to monophosphate derivatives. Essential to sustain methyl recycling. This is Adenosine kinase 1 from Arabidopsis thaliana (Mouse-ear cress).